Reading from the N-terminus, the 95-residue chain is MSLVESDFEECLEFFSRPLPELLDGLLASLGEAGNLDSQGQRVEKAALVLELTGTECVREVVFKQEERGRLRGTEGPSRPPSSGAGDPRGATTLG.

The tract at residues 66–95 (EERGRLRGTEGPSRPPSSGAGDPRGATTLG) is disordered.

This sequence belongs to the herpesviridae UL91 family.

This is an uncharacterized protein from Equine herpesvirus 2 (strain 86/87) (EHV-2).